Here is a 493-residue protein sequence, read N- to C-terminus: Putative BTB/POZ domain-containing protein L35 (493 aa).

One can recognise a BTB domain in the interval 16-87; the sequence is TDLKLTLVDD…YLVDNKSEVD (72 aa).

It belongs to the mimivirus BTB/WD family.

This Acanthamoeba polyphaga (Amoeba) protein is Putative BTB/POZ domain-containing protein L35.